We begin with the raw amino-acid sequence, 787 residues long: Endonuclease MutS2 (787 aa).

An ATP-binding site is contributed by 334-341 (GPNTGGKT). The Smr domain occupies 712–787 (LDLRGKRYEE…GNGATIVTFK (76 aa)).

This sequence belongs to the DNA mismatch repair MutS family. MutS2 subfamily. As to quaternary structure, homodimer. Binds to stalled ribosomes, contacting rRNA.

In terms of biological role, endonuclease that is involved in the suppression of homologous recombination and thus may have a key role in the control of bacterial genetic diversity. Acts as a ribosome collision sensor, splitting the ribosome into its 2 subunits. Detects stalled/collided 70S ribosomes which it binds and splits by an ATP-hydrolysis driven conformational change. Acts upstream of the ribosome quality control system (RQC), a ribosome-associated complex that mediates the extraction of incompletely synthesized nascent chains from stalled ribosomes and their subsequent degradation. Probably generates substrates for RQC. The protein is Endonuclease MutS2 of Latilactobacillus sakei subsp. sakei (strain 23K) (Lactobacillus sakei subsp. sakei).